A 346-amino-acid chain; its full sequence is uncharacterized protein (346 aa).

His65 provides a ligand contact to Zn(2+). Asp67 is an active-site residue. Asp89 lines the Zn(2+) pocket. Residue Glu115 is the Proton acceptor of the active site. Residues Glu116, Glu145, and His319 each coordinate Zn(2+).

This sequence belongs to the peptidase M20A family. The cofactor is Zn(2+). Requires Co(2+) as cofactor.

This is an uncharacterized protein from Methanocaldococcus jannaschii (strain ATCC 43067 / DSM 2661 / JAL-1 / JCM 10045 / NBRC 100440) (Methanococcus jannaschii).